A 388-amino-acid chain; its full sequence is Succinate--CoA ligase [ADP-forming] subunit beta (388 aa).

Residues 9 to 244 enclose the ATP-grasp domain; the sequence is KSLFAEYGLP…PSQDDAREAH (236 aa). ATP contacts are provided by residues lysine 46, 53-55, glutamate 99, threonine 102, and glutamate 107; that span reads GRG. The Mg(2+) site is built by asparagine 199 and aspartate 213. Residues asparagine 264 and 321–323 each bind substrate; that span reads GIV.

The protein belongs to the succinate/malate CoA ligase beta subunit family. In terms of assembly, heterotetramer of two alpha and two beta subunits. Mg(2+) serves as cofactor.

The catalysed reaction is succinate + ATP + CoA = succinyl-CoA + ADP + phosphate. It carries out the reaction GTP + succinate + CoA = succinyl-CoA + GDP + phosphate. Its pathway is carbohydrate metabolism; tricarboxylic acid cycle; succinate from succinyl-CoA (ligase route): step 1/1. Functionally, succinyl-CoA synthetase functions in the citric acid cycle (TCA), coupling the hydrolysis of succinyl-CoA to the synthesis of either ATP or GTP and thus represents the only step of substrate-level phosphorylation in the TCA. The beta subunit provides nucleotide specificity of the enzyme and binds the substrate succinate, while the binding sites for coenzyme A and phosphate are found in the alpha subunit. The chain is Succinate--CoA ligase [ADP-forming] subunit beta from Shewanella woodyi (strain ATCC 51908 / MS32).